The primary structure comprises 519 residues: 2,3-bisphosphoglycerate-independent phosphoglycerate mutase (519 aa).

The Mn(2+) site is built by Asp-9 and Ser-60. Residue Ser-60 is the Phosphoserine intermediate of the active site. Residues 76–91 (DSARVSDSIARSRGEA) are compositionally biased toward basic and acidic residues. The tract at residues 76–102 (DSARVSDSIARSRGEAPPDDDAQDPPF) is disordered. Substrate is bound by residues His-134, 163 to 164 (RD), Arg-195, Arg-201, 267 to 270 (RSDR), and Lys-341. Mn(2+)-binding residues include Asp-408, His-412, Asp-449, His-450, and His-466.

Belongs to the BPG-independent phosphoglycerate mutase family. The cofactor is Mn(2+).

It catalyses the reaction (2R)-2-phosphoglycerate = (2R)-3-phosphoglycerate. It functions in the pathway carbohydrate degradation; glycolysis; pyruvate from D-glyceraldehyde 3-phosphate: step 3/5. In terms of biological role, catalyzes the interconversion of 2-phosphoglycerate and 3-phosphoglycerate. This is 2,3-bisphosphoglycerate-independent phosphoglycerate mutase from Haloarcula marismortui (strain ATCC 43049 / DSM 3752 / JCM 8966 / VKM B-1809) (Halobacterium marismortui).